We begin with the raw amino-acid sequence, 203 residues long: MSRYTGPSWKQSRRYGISLSGSGKEIARRNYVPGQHGPNNRSKLSEYGLQLAEKQKLRFSYGLSERQFRNLYIAATKVKEGTVGFNFMTLLEQRLDNVVFRLGLATTRRQARQFVNHGHILVDGKRVDIPSFRVQPGQVISVREKSMKVPAILEAVEATKGRANFVSFDADKLEGTLVRLPERDEINPEINEALIVEFYNKMM.

The region spanning 93–156 is the S4 RNA-binding domain; the sequence is QRLDNVVFRL…MKVPAILEAV (64 aa).

This sequence belongs to the universal ribosomal protein uS4 family. Part of the 30S ribosomal subunit. Contacts protein S5. The interaction surface between S4 and S5 is involved in control of translational fidelity.

In terms of biological role, one of the primary rRNA binding proteins, it binds directly to 16S rRNA where it nucleates assembly of the body of the 30S subunit. Functionally, with S5 and S12 plays an important role in translational accuracy. This Lactococcus lactis subsp. lactis (strain IL1403) (Streptococcus lactis) protein is Small ribosomal subunit protein uS4.